Consider the following 402-residue polypeptide: Formate-dependent phosphoribosylglycinamide formyltransferase (402 aa).

Residues 23–24 (EL) and Glu-83 contribute to the N(1)-(5-phospho-beta-D-ribosyl)glycinamide site. ATP is bound by residues Arg-116, Lys-157, 162–167 (SSGKGQ), 197–200 (ESQI), and Glu-205. Residues 121–316 (RLAAEELGLP…EFELHARAIL (196 aa)) form the ATP-grasp domain. Mg(2+) contacts are provided by Glu-275 and Glu-287. N(1)-(5-phospho-beta-D-ribosyl)glycinamide contacts are provided by residues Asp-294, Lys-363, and 370 to 371 (RR).

It belongs to the PurK/PurT family. As to quaternary structure, homodimer.

It carries out the reaction N(1)-(5-phospho-beta-D-ribosyl)glycinamide + formate + ATP = N(2)-formyl-N(1)-(5-phospho-beta-D-ribosyl)glycinamide + ADP + phosphate + H(+). It participates in purine metabolism; IMP biosynthesis via de novo pathway; N(2)-formyl-N(1)-(5-phospho-D-ribosyl)glycinamide from N(1)-(5-phospho-D-ribosyl)glycinamide (formate route): step 1/1. Involved in the de novo purine biosynthesis. Catalyzes the transfer of formate to 5-phospho-ribosyl-glycinamide (GAR), producing 5-phospho-ribosyl-N-formylglycinamide (FGAR). Formate is provided by PurU via hydrolysis of 10-formyl-tetrahydrofolate. In Acinetobacter baumannii (strain ATCC 17978 / DSM 105126 / CIP 53.77 / LMG 1025 / NCDC KC755 / 5377), this protein is Formate-dependent phosphoribosylglycinamide formyltransferase.